A 397-amino-acid polypeptide reads, in one-letter code: Elongation factor Tu (397 aa).

The region spanning 10–207 (KPHVNIGTIG…ACDSYIPEPE (198 aa)) is the tr-type G domain. Residues 19-26 (GHIDHGKT) form a G1 region. A GTP-binding site is contributed by 19 to 26 (GHIDHGKT). Residue Thr26 coordinates Mg(2+). The interval 60 to 64 (GITIA) is G2. Positions 81–84 (DCPG) are G3. Residues 81–85 (DCPGH) and 136–139 (NKCD) each bind GTP. The interval 136 to 139 (NKCD) is G4. The tract at residues 174-176 (SAL) is G5.

This sequence belongs to the TRAFAC class translation factor GTPase superfamily. Classic translation factor GTPase family. EF-Tu/EF-1A subfamily. Monomer.

The protein localises to the cytoplasm. The enzyme catalyses GTP + H2O = GDP + phosphate + H(+). Its function is as follows. GTP hydrolase that promotes the GTP-dependent binding of aminoacyl-tRNA to the A-site of ribosomes during protein biosynthesis. The protein is Elongation factor Tu of Oleidesulfovibrio alaskensis (strain ATCC BAA-1058 / DSM 17464 / G20) (Desulfovibrio alaskensis).